The sequence spans 831 residues: AdoMet-dependent rRNA methyltransferase SPB1 (831 aa).

The S-adenosyl-L-methionine site is built by G58, W60, D78, D94, and D119. Residue K159 is the Proton acceptor of the active site. Coiled coils occupy residues 346–389 (LTED…QMNM) and 440–479 (NDIN…ERDA). Disordered regions lie at residues 492 to 535 (DEGW…ADQR) and 565 to 645 (MNKK…DQQS). Basic and acidic residues predominate over residues 499 to 510 (ESDKEGSDKETE). Composition is skewed to acidic residues over residues 511–526 (ANDY…DDDE), 594–611 (MEVD…DSDF), and 618–631 (PDEE…DNEN). Over residues 632 to 645 (DVSRKYSKAKDQQS) the composition is skewed to basic and acidic residues. Residues 729-782 (LEAQGRKKLRALKRLEKLKKKSDMINEDSAKSERDKADEIQKLMKKLTKKQKTK) adopt a coiled-coil conformation.

Belongs to the class I-like SAM-binding methyltransferase superfamily. RNA methyltransferase RlmE family. SPB1 subfamily. As to quaternary structure, component of the nucleolar and nucleoplasmic pre-60S ribosomal particle.

The protein localises to the nucleus. It localises to the nucleolus. It catalyses the reaction a ribonucleotide in rRNA + S-adenosyl-L-methionine = a 2'-O-methylribonucleotide in rRNA + S-adenosyl-L-homocysteine + H(+). Functionally, required for proper assembly of pre-ribosomal particles during the biogenesis of the 60S ribosomal subunit. This Debaryomyces hansenii (strain ATCC 36239 / CBS 767 / BCRC 21394 / JCM 1990 / NBRC 0083 / IGC 2968) (Yeast) protein is AdoMet-dependent rRNA methyltransferase SPB1.